The primary structure comprises 49 residues: Large ribosomal subunit protein bL33 (49 aa).

Residues isoleucine 18–lysine 49 are disordered. Basic and acidic residues predominate over residues asparagine 25–lysine 34.

It belongs to the bacterial ribosomal protein bL33 family.

The chain is Large ribosomal subunit protein bL33 from Lysinibacillus sphaericus (strain C3-41).